Consider the following 225-residue polypeptide: Tryptophan synthase beta chain (225 aa).

This sequence belongs to the TrpB family. Tetramer of two alpha and two beta chains. It depends on pyridoxal 5'-phosphate as a cofactor.

It carries out the reaction (1S,2R)-1-C-(indol-3-yl)glycerol 3-phosphate + L-serine = D-glyceraldehyde 3-phosphate + L-tryptophan + H2O. Its pathway is amino-acid biosynthesis; L-tryptophan biosynthesis; L-tryptophan from chorismate: step 5/5. The beta subunit is responsible for the synthesis of L-tryptophan from indole and L-serine. This is Tryptophan synthase beta chain (trpB) from Buchnera aphidicola subsp. Rhopalosiphum maidis.